Reading from the N-terminus, the 381-residue chain is UDP-N-acetylglucosamine--N-acetylmuramyl-(pentapeptide) pyrophosphoryl-undecaprenol N-acetylglucosamine transferase (381 aa).

Residues 10–12 (TGG), Asn124, Arg165, Ser190, Ile245, and Gln290 contribute to the UDP-N-acetyl-alpha-D-glucosamine site. The segment at 361–381 (WGSPAGQERPGHGPVRPPDLA) is disordered.

The protein belongs to the glycosyltransferase 28 family. MurG subfamily.

It localises to the cell inner membrane. It carries out the reaction di-trans,octa-cis-undecaprenyl diphospho-N-acetyl-alpha-D-muramoyl-L-alanyl-D-glutamyl-meso-2,6-diaminopimeloyl-D-alanyl-D-alanine + UDP-N-acetyl-alpha-D-glucosamine = di-trans,octa-cis-undecaprenyl diphospho-[N-acetyl-alpha-D-glucosaminyl-(1-&gt;4)]-N-acetyl-alpha-D-muramoyl-L-alanyl-D-glutamyl-meso-2,6-diaminopimeloyl-D-alanyl-D-alanine + UDP + H(+). Its pathway is cell wall biogenesis; peptidoglycan biosynthesis. Functionally, cell wall formation. Catalyzes the transfer of a GlcNAc subunit on undecaprenyl-pyrophosphoryl-MurNAc-pentapeptide (lipid intermediate I) to form undecaprenyl-pyrophosphoryl-MurNAc-(pentapeptide)GlcNAc (lipid intermediate II). This is UDP-N-acetylglucosamine--N-acetylmuramyl-(pentapeptide) pyrophosphoryl-undecaprenol N-acetylglucosamine transferase from Anaeromyxobacter sp. (strain Fw109-5).